The chain runs to 602 residues: Protein NRT1/ PTR FAMILY 5.7 (602 aa).

2 helical membrane-spanning segments follow: residues 56 to 73 (LSYF…TTIL) and 87 to 107 (WSGV…AYLG). The residue at position 111 (Thr111) is a Phosphothreonine. The next 10 helical transmembrane spans lie at 112 to 132 (VLLA…SWFI), 152 to 172 (IAFF…KPSL), 197 to 217 (WWNA…VYIE), 220 to 240 (IGWG…FFIF), 337 to 357 (VKLL…GVCA), 381 to 401 (IVPP…TVTI), 422 to 442 (ILQR…IAAL), 465 to 485 (IWLA…LVGL), 500 to 520 (LGIA…NLLI), and 548 to 568 (FYWM…IVAM).

Belongs to the major facilitator superfamily. Proton-dependent oligopeptide transporter (POT/PTR) (TC 2.A.17) family. In terms of tissue distribution, expressed in shoots, stems, leaves and flowers.

Its subcellular location is the membrane. This Arabidopsis thaliana (Mouse-ear cress) protein is Protein NRT1/ PTR FAMILY 5.7 (NPF5.7).